Here is a 525-residue protein sequence, read N- to C-terminus: Packaging protein UL32 homolog (525 aa).

Over residues 1-12 the composition is skewed to polar residues; it reads MAHKVTSANEPN. The tract at residues 1–20 is disordered; sequence MAHKVTSANEPNPLTGKRLS. Residues C95, C98, H173, C179, C255, C256, C357, C360, H427, C434, C473, and H510 each contribute to the Zn(2+) site. Zinc finger stretches follow at residues 95-179, 255-510, and 357-434; these read CRVC…ICRC, CCHL…LRIH, and CPLC…DPLC.

Belongs to the herpesviridae UL32 protein family.

The protein resides in the host cytoplasm. Its subcellular location is the host nucleus. Plays a role in efficient localization of neo-synthesized capsids to nuclear replication compartments, thereby controlling cleavage and packaging of virus genomic DNA. This Epstein-Barr virus (strain B95-8) (HHV-4) protein is Packaging protein UL32 homolog.